Here is a 281-residue protein sequence, read N- to C-terminus: Para-Rep C9 (281 aa).

Residues 1–95 (MSAVNWVFTL…VAGPWSYGEL (95 aa)) enclose the CRESS-DNA virus Rep endonuclease domain. The RCR-1 signature appears at 7 to 10 (VFTL). A divalent metal cation contacts are provided by Glu-33 and His-39. The RCR-2 motif lies at 39–41 (HIQ). Positions 48–69 (KKAKMNTVKNIIGGNPHLEKMK) match the Nuclear localization signal motif. Residue Tyr-78 is the For DNA cleavage activity of the active site. An RCR-3 motif is present at residues 78–81 (YAQK). A divalent metal cation is bound at residue Glu-83. The Nuclear localization signal motif lies at 95–101 (LLKKGSH). 178–180 (GKS) serves as a coordination point for ATP.

The protein belongs to the nanoviridea/circoviridae replication-associated protein family. In terms of assembly, homooligomer (Potential). Rep binds to repeated DNA motifs (iterons). Mg(2+) is required as a cofactor. Mn(2+) serves as cofactor.

The protein localises to the host nucleus. The catalysed reaction is ATP + H2O = ADP + phosphate + H(+). In terms of biological role, initiates and terminates the replication only of its own subviral DNA molecule. The closed circular ssDNA genome is first converted to a superhelical dsDNA. Rep binds a specific hairpin at the genome origin of replication. Introduces an endonucleolytic nick within the intergenic region of the genome, thereby initiating the rolling circle replication (RCR). Following cleavage, binds covalently to the 5'-phosphate of DNA as a tyrosyl ester. The cleavage gives rise to a free 3'-OH that serves as a primer for the cellular DNA polymerase. The polymerase synthesizes the (+) strand DNA by rolling circle mechanism. After one round of replication, a Rep-catalyzed nucleotidyl transfer reaction releases a circular single-stranded virus genome, thereby terminating the replication. Displays origin-specific DNA cleavage, nucleotidyl transferase, ATPase and helicase activities. In Faba bean necrotic yellows C9 alphasatellite (FBNYC9A), this protein is Para-Rep C9 (C9).